The following is a 396-amino-acid chain: Elongation factor Tu (396 aa).

The tr-type G domain occupies 10–206 (KPHVNVGTIG…ALDTYIPTPE (197 aa)). A G1 region spans residues 19-26 (GHVDHGKT). Residue 19-26 (GHVDHGKT) participates in GTP binding. A Mg(2+)-binding site is contributed by threonine 26. Residues 60–64 (GITIN) form a G2 region. The tract at residues 81–84 (DCPG) is G3. GTP-binding positions include 81 to 85 (DCPGH) and 136 to 139 (NKCD). The G4 stretch occupies residues 136-139 (NKCD). The segment at 174–176 (SAK) is G5.

This sequence belongs to the TRAFAC class translation factor GTPase superfamily. Classic translation factor GTPase family. EF-Tu/EF-1A subfamily. As to quaternary structure, monomer.

It is found in the cytoplasm. The catalysed reaction is GTP + H2O = GDP + phosphate + H(+). In terms of biological role, GTP hydrolase that promotes the GTP-dependent binding of aminoacyl-tRNA to the A-site of ribosomes during protein biosynthesis. This is Elongation factor Tu from Burkholderia cenocepacia (strain HI2424).